A 434-amino-acid polypeptide reads, in one-letter code: Histidinol dehydrogenase (434 aa).

Residues tyrosine 130, glutamine 191, and asparagine 214 each contribute to the NAD(+) site. 3 residues coordinate substrate: serine 237, glutamine 259, and histidine 262. Zn(2+)-binding residues include glutamine 259 and histidine 262. Catalysis depends on proton acceptor residues glutamate 328 and histidine 329. 4 residues coordinate substrate: histidine 329, aspartate 362, glutamate 416, and histidine 421. Aspartate 362 provides a ligand contact to Zn(2+). Histidine 421 lines the Zn(2+) pocket.

This sequence belongs to the histidinol dehydrogenase family. The cofactor is Zn(2+).

The enzyme catalyses L-histidinol + 2 NAD(+) + H2O = L-histidine + 2 NADH + 3 H(+). It functions in the pathway amino-acid biosynthesis; L-histidine biosynthesis; L-histidine from 5-phospho-alpha-D-ribose 1-diphosphate: step 9/9. Its function is as follows. Catalyzes the sequential NAD-dependent oxidations of L-histidinol to L-histidinaldehyde and then to L-histidine. The chain is Histidinol dehydrogenase from Rhodospirillum rubrum (strain ATCC 11170 / ATH 1.1.1 / DSM 467 / LMG 4362 / NCIMB 8255 / S1).